The sequence spans 231 residues: Large ribosomal subunit protein uL3 (231 aa).

Gln151 carries the post-translational modification N5-methylglutamine.

It belongs to the universal ribosomal protein uL3 family. In terms of assembly, part of the 50S ribosomal subunit. Forms a cluster with proteins L14 and L19. Post-translationally, methylated by PrmB.

Its function is as follows. One of the primary rRNA binding proteins, it binds directly near the 3'-end of the 23S rRNA, where it nucleates assembly of the 50S subunit. In Ehrlichia canis (strain Jake), this protein is Large ribosomal subunit protein uL3.